The primary structure comprises 304 residues: Aspartate carbamoyltransferase catalytic subunit (304 aa).

The carbamoyl phosphate site is built by Arg53 and Thr54. Lys82 contributes to the L-aspartate binding site. Carbamoyl phosphate-binding residues include Arg103, His131, and Gln134. 2 residues coordinate L-aspartate: Arg163 and Arg224. The carbamoyl phosphate site is built by Leu263 and Pro264.

This sequence belongs to the aspartate/ornithine carbamoyltransferase superfamily. ATCase family. In terms of assembly, heterooligomer of catalytic and regulatory chains.

It catalyses the reaction carbamoyl phosphate + L-aspartate = N-carbamoyl-L-aspartate + phosphate + H(+). It participates in pyrimidine metabolism; UMP biosynthesis via de novo pathway; (S)-dihydroorotate from bicarbonate: step 2/3. Functionally, catalyzes the condensation of carbamoyl phosphate and aspartate to form carbamoyl aspartate and inorganic phosphate, the committed step in the de novo pyrimidine nucleotide biosynthesis pathway. This chain is Aspartate carbamoyltransferase catalytic subunit, found in Haloarcula marismortui (strain ATCC 43049 / DSM 3752 / JCM 8966 / VKM B-1809) (Halobacterium marismortui).